A 527-amino-acid polypeptide reads, in one-letter code: Peptide chain release factor 3 (527 aa).

The tr-type G domain occupies 9 to 277 (AKRRTFAIIS…AVVDWAPKPL (269 aa)). Residues 18–25 (SHPDAGKT), 86–90 (DTPGH), and 140–143 (NKLD) contribute to the GTP site.

Belongs to the TRAFAC class translation factor GTPase superfamily. Classic translation factor GTPase family. PrfC subfamily.

It localises to the cytoplasm. Increases the formation of ribosomal termination complexes and stimulates activities of RF-1 and RF-2. It binds guanine nucleotides and has strong preference for UGA stop codons. It may interact directly with the ribosome. The stimulation of RF-1 and RF-2 is significantly reduced by GTP and GDP, but not by GMP. The polypeptide is Peptide chain release factor 3 (Stutzerimonas stutzeri (strain A1501) (Pseudomonas stutzeri)).